Reading from the N-terminus, the 705-residue chain is Elongation factor G 2 (705 aa).

One can recognise a tr-type G domain in the interval 8–288; it reads ERYRNIGISA…AVIDYLPSPA (281 aa). GTP is bound by residues 17–24, 86–90, and 140–143; these read AHIDAGKT, DTPGH, and NKMD.

It belongs to the TRAFAC class translation factor GTPase superfamily. Classic translation factor GTPase family. EF-G/EF-2 subfamily.

Its subcellular location is the cytoplasm. Its function is as follows. Catalyzes the GTP-dependent ribosomal translocation step during translation elongation. During this step, the ribosome changes from the pre-translocational (PRE) to the post-translocational (POST) state as the newly formed A-site-bound peptidyl-tRNA and P-site-bound deacylated tRNA move to the P and E sites, respectively. Catalyzes the coordinated movement of the two tRNA molecules, the mRNA and conformational changes in the ribosome. The chain is Elongation factor G 2 from Bordetella parapertussis (strain 12822 / ATCC BAA-587 / NCTC 13253).